Consider the following 916-residue polypeptide: Pertactin autotransporter (916 aa).

Positions 1–37 (MNMSLSRIVKAAPLRRTTLAMALGALGALGAAPAAHA) are cleaved as a signal peptide. Positions 263–265 (RGD) match the Cell attachment site; involved in adhesion to various eukaryotic cell lines motif. Repeat copies occupy residues 269 to 273 (GGAVP), 274 to 278 (GGAVP), and 279 to 283 (GGAVP). Positions 269–288 (GGAVPGGAVPGGAVPGGFGP) are 4 X 5 AA tandem repeats of G-G-A-V-P. One copy of the 4; approximate repeat lies at 284–288 (GGFGP). Residues 564–613 (SLVGAKAPPAPKPAPQPGPQPGPQPPQPPQPPQRQPEAPAPQPPAGRELS) are disordered. Over residues 571 to 607 (PPAPKPAPQPGPQPGPQPPQPPQPPQRQPEAPAPQPP) the composition is skewed to pro residues. A 6 X 3 AA repeats of P-Q-P region spans residues 578-606 (PQPGPQPGPQPPQPPQPPQRQPEAPAPQP). Residues 648–916 (LNPDAGGAWG…TFHAGYRYSW (269 aa)) enclose the Autotransporter domain. The short motif at 706–708 (RGD) is the Cell attachment site element.

In terms of assembly, monomer.

The protein localises to the periplasm. It is found in the secreted. The protein resides in the cell surface. Its subcellular location is the cell outer membrane. In terms of biological role, agglutinogen that binds to eukaryotic cells; a process mediated by the R-G-D sequence. Pertactin may have a role in bacterial adhesion, and thus play a role in virulence. May contribute to the disease state of whooping cough. This is Pertactin autotransporter (prn) from Bordetella bronchiseptica (strain ATCC BAA-588 / NCTC 13252 / RB50) (Alcaligenes bronchisepticus).